Reading from the N-terminus, the 690-residue chain is Sodium-dependent phosphate transport protein 2B (690 aa).

Positions 1–42 (MAPWPELGDAQPNPDKYLEGAAGQQPTAPDKSKETNKTDNTE) are disordered. Residues 1-100 (MAPWPELGDA…ILCFFQGIGR (100 aa)) lie on the Cytoplasmic side of the membrane. Residues 30–40 (DKSKETNKTDN) are compositionally biased toward basic and acidic residues. Residues 101–121 (LILLLGFLYFFVCSLDILSSA) form a helical membrane-spanning segment. Residues 122–135 (FQLVGGKMAGQFFS) are Extracellular-facing. The chain crosses the membrane as a helical span at residues 136-156 (NSSIMSNPLLGLVIGVLVTVL). Residues 157–212 (VQSSSTSTSIVVSMVSSSLLTVRAAIPIIMGANIGTSITNTIVALMQVGDRSEFRR) lie on the Cytoplasmic side of the membrane. The chain crosses the membrane as a helical span at residues 213-233 (AFAGATVHDFFNWLSVLVLLP). At 234–362 (VEVATHYLEI…IFVNFHLPDL (129 aa)) the chain is on the extracellular side. 5 N-linked (GlcNAc...) asparagine glycosylation sites follow: asparagine 295, asparagine 308, asparagine 313, asparagine 321, and asparagine 340. Cysteine 303 and cysteine 350 are disulfide-bonded. A helical membrane pass occupies residues 363–383 (AVGTILLILSLLVLCGCLIMI). Over 384–407 (VKILGSVLKGQVATVIKKTINTDF) the chain is Cytoplasmic. A helical transmembrane segment spans residues 408–428 (PFPFAWLTGYLAILVGAGMTF). The Extracellular segment spans residues 429 to 485 (IVQSSSVFTSALTPLIGIGVITIERAYPLTLGSNIGTTTTAILAALASPGNALRSSL). A helical transmembrane segment spans residues 486 to 506 (QIALCHFFFNISGILLWYPIP). Topologically, residues 507-525 (FTRLPIRMAKGLGNISAKY) are cytoplasmic. The chain crosses the membrane as a helical span at residues 526–546 (RWFAVFYLIIFFFLIPLTVFG). The Extracellular portion of the chain corresponds to 547 to 552 (LSLAGW). A helical membrane pass occupies residues 553 to 573 (RVLVGVGVPVVFIIILVLCLR). The Cytoplasmic segment spans residues 574 to 689 (LLQSRCPRVL…ASDSKTECTA (116 aa)).

The protein belongs to the SLC34A transporter family. Highly expressed in lung. Also detected in pancreas, kidney, small intestine, ovary, testis, prostate and mammary gland. In lung, it is found in alveolar type II cells but not in bronchiolar epithelium.

The protein localises to the apical cell membrane. It carries out the reaction 3 Na(+)(out) + phosphate(out) = 3 Na(+)(in) + phosphate(in). Involved in actively transporting phosphate into cells via Na(+) cotransport. This Homo sapiens (Human) protein is Sodium-dependent phosphate transport protein 2B (SLC34A2).